Here is a 723-residue protein sequence, read N- to C-terminus: Polyribonucleotide nucleotidyltransferase (723 aa).

Mg(2+) contacts are provided by D497 and D503. Residues 564–623 enclose the KH domain; the sequence is PRLLSFRIDPELIGTVIGPGGRTIKGITERTNTKIDIEDGGIVTIASHDGAAAEAAQRII. An S1 motif domain is found at 633–701; that stretch reads GEVFTGTITR…NRGRINLTLR (69 aa). The interval 701 to 723 is disordered; it reads RGVPQNGEETQSEPAPTPVAPLN.

This sequence belongs to the polyribonucleotide nucleotidyltransferase family. It depends on Mg(2+) as a cofactor.

The protein resides in the cytoplasm. It catalyses the reaction RNA(n+1) + phosphate = RNA(n) + a ribonucleoside 5'-diphosphate. Functionally, involved in mRNA degradation. Catalyzes the phosphorolysis of single-stranded polyribonucleotides processively in the 3'- to 5'-direction. The protein is Polyribonucleotide nucleotidyltransferase of Prochlorococcus marinus (strain MIT 9313).